The primary structure comprises 212 residues: Thymidylate kinase (212 aa).

10 to 17 (GIDGCGKT) is a binding site for ATP.

This sequence belongs to the thymidylate kinase family.

The catalysed reaction is dTMP + ATP = dTDP + ADP. Its function is as follows. Phosphorylation of dTMP to form dTDP in both de novo and salvage pathways of dTTP synthesis. The polypeptide is Thymidylate kinase (Prochlorococcus marinus (strain MIT 9312)).